The following is a 350-amino-acid chain: Probable nicotinate-nucleotide adenylyltransferase/Ap4A hydrolase (350 aa).

The interval 1 to 187 (MKQKIIIFGG…YINTNHLYLI (187 aa)) is naMN adenylyltransferase. Residues 196-350 (DKRFQHCLRV…LKYVQNLVKD (155 aa)) form an ap4A hydrolase region. Residues 198–310 (RFQHCLRVGK…VYLADKLEPN (113 aa)) form the HD domain. H201 is a binding site for ADP. Residues H201, H230, and D231 each coordinate Fe cation. Residues 231 to 234 (DLAK), H261, 287 to 288 (HT), D305, and R311 contribute to the ADP site. D305 is a Fe cation binding site.

It in the N-terminal section; belongs to the NadD family. In the C-terminal section; belongs to the Ap4A hydrolase YqeK family.

The catalysed reaction is nicotinate beta-D-ribonucleotide + ATP + H(+) = deamido-NAD(+) + diphosphate. It carries out the reaction P(1),P(4)-bis(5'-adenosyl) tetraphosphate + H2O = 2 ADP + 2 H(+). The protein operates within cofactor biosynthesis; NAD(+) biosynthesis; deamido-NAD(+) from nicotinate D-ribonucleotide: step 1/1. Functionally, catalyzes the reversible adenylation of nicotinate mononucleotide (NaMN) to nicotinic acid adenine dinucleotide (NaAD). Its function is as follows. Hydrolyzes diadenosine 5',5'''-P1,P4-tetraphosphate (Ap4A) to yield ADP. This is Probable nicotinate-nucleotide adenylyltransferase/Ap4A hydrolase from Mycoplasma genitalium (strain ATCC 33530 / DSM 19775 / NCTC 10195 / G37) (Mycoplasmoides genitalium).